A 320-amino-acid chain; its full sequence is Malate dehydrogenase (320 aa).

Residues Gly-10–Gly-15 and Asp-34 contribute to the NAD(+) site. Substrate contacts are provided by Arg-83 and Arg-89. Residues Asn-96 and Ile-119–Asn-121 contribute to the NAD(+) site. Substrate is bound by residues Asn-121 and Arg-152. The active-site Proton acceptor is His-176.

It belongs to the LDH/MDH superfamily. MDH type 3 family.

It catalyses the reaction (S)-malate + NAD(+) = oxaloacetate + NADH + H(+). Its function is as follows. Catalyzes the reversible oxidation of malate to oxaloacetate. The protein is Malate dehydrogenase of Bartonella tribocorum (strain CIP 105476 / IBS 506).